The sequence spans 292 residues: Recombination-promoting nuclease RpnA (292 aa).

The protein belongs to the Rpn/YhgA-like nuclease family. Requires Mg(2+) as cofactor.

Inhibited by EDTA, Zn(2+) and by Mg(2+) plus Mn(2+); stimulated by Ca(2+) in the presence of Mg(2+). A low activity DNA endonuclease yielding 3'-hydroxyl ends, equally active on ss or dsDNA, not active on dsRNA. Shows no sequence specificity. Upon expression enhances RecA-independent DNA recombination 49-fold, concomitantly reducing viability by 88% and probably inducing DNA damage as measured by induction of the SOS repair response in RecA cells. RecA-independent DNA recombination leads to replacement of recipient genes with large segments of donor DNA rather than DNA addition to the donor strain; increased expression of RpnA leads to smaller replacement segments, suggesting this protein may play a role in generating crossover events. This chain is Recombination-promoting nuclease RpnA, found in Escherichia coli (strain K12).